A 156-amino-acid chain; its full sequence is Cyanate hydratase (156 aa).

Catalysis depends on residues R96, E99, and S122.

This sequence belongs to the cyanase family.

It carries out the reaction cyanate + hydrogencarbonate + 3 H(+) = NH4(+) + 2 CO2. Its function is as follows. Catalyzes the reaction of cyanate with bicarbonate to produce ammonia and carbon dioxide. This is Cyanate hydratase from Pseudomonas paraeruginosa (strain DSM 24068 / PA7) (Pseudomonas aeruginosa (strain PA7)).